The chain runs to 261 residues: Cytochrome c oxidase subunit 3 (261 aa).

At 1 to 15 (MTHQTHAYHMVNPSP) the chain is on the mitochondrial matrix side. Residues 16–34 (WPLTGALSALLMTSGLIMW) traverse the membrane as a helical segment. The Mitochondrial intermembrane portion of the chain corresponds to 35 to 40 (FHFNST). A helical transmembrane segment spans residues 41–66 (TLLMLGLTTNMLTMYQWWRDVVREST). Topologically, residues 67–72 (FQGHHT) are mitochondrial matrix. The chain crosses the membrane as a helical span at residues 73 to 105 (PNVQKGLRYGMILFIISEVLFFTGFFWAFYHSS). Residues 106-128 (LAPTPELGGCWPPTGIHPLNPLE) are Mitochondrial intermembrane-facing. Residues 129-152 (VPLLNTSVLLASGVSITWAHHSLM) form a helical membrane-spanning segment. The Mitochondrial matrix segment spans residues 153–155 (EGN). The chain crosses the membrane as a helical span at residues 156–183 (RNHMLQALFITIALGVYFTLLQASEYYE). Residues 184–190 (APFTISD) lie on the Mitochondrial intermembrane side of the membrane. Residues 191–223 (GVYGSTFFVATGFHGLHVIIGSTFLIVCFFRQL) traverse the membrane as a helical segment. At 224 to 232 (KFHFTSSHH) the chain is on the mitochondrial matrix side. A helical membrane pass occupies residues 233–256 (FGFEAAAWYWHFVDVVWLFLYVSI). Residues 257–261 (YWWGS) lie on the Mitochondrial intermembrane side of the membrane.

Belongs to the cytochrome c oxidase subunit 3 family. In terms of assembly, component of the cytochrome c oxidase (complex IV, CIV), a multisubunit enzyme composed of 14 subunits. The complex is composed of a catalytic core of 3 subunits MT-CO1, MT-CO2 and MT-CO3, encoded in the mitochondrial DNA, and 11 supernumerary subunits COX4I, COX5A, COX5B, COX6A, COX6B, COX6C, COX7A, COX7B, COX7C, COX8 and NDUFA4, which are encoded in the nuclear genome. The complex exists as a monomer or a dimer and forms supercomplexes (SCs) in the inner mitochondrial membrane with NADH-ubiquinone oxidoreductase (complex I, CI) and ubiquinol-cytochrome c oxidoreductase (cytochrome b-c1 complex, complex III, CIII), resulting in different assemblies (supercomplex SCI(1)III(2)IV(1) and megacomplex MCI(2)III(2)IV(2)).

The protein localises to the mitochondrion inner membrane. It carries out the reaction 4 Fe(II)-[cytochrome c] + O2 + 8 H(+)(in) = 4 Fe(III)-[cytochrome c] + 2 H2O + 4 H(+)(out). Its function is as follows. Component of the cytochrome c oxidase, the last enzyme in the mitochondrial electron transport chain which drives oxidative phosphorylation. The respiratory chain contains 3 multisubunit complexes succinate dehydrogenase (complex II, CII), ubiquinol-cytochrome c oxidoreductase (cytochrome b-c1 complex, complex III, CIII) and cytochrome c oxidase (complex IV, CIV), that cooperate to transfer electrons derived from NADH and succinate to molecular oxygen, creating an electrochemical gradient over the inner membrane that drives transmembrane transport and the ATP synthase. Cytochrome c oxidase is the component of the respiratory chain that catalyzes the reduction of oxygen to water. Electrons originating from reduced cytochrome c in the intermembrane space (IMS) are transferred via the dinuclear copper A center (CU(A)) of subunit 2 and heme A of subunit 1 to the active site in subunit 1, a binuclear center (BNC) formed by heme A3 and copper B (CU(B)). The BNC reduces molecular oxygen to 2 water molecules using 4 electrons from cytochrome c in the IMS and 4 protons from the mitochondrial matrix. This is Cytochrome c oxidase subunit 3 (MT-CO3) from Gazella spekei (Speke's gazelle).